Consider the following 777-residue polypeptide: Probable aconitate hydratase, mitochondrial (777 aa).

The N-terminal 26 residues, 1–26 (MNSLLRLSHLAGPAHYRALHSSSSIW), are a transit peptide targeting the mitochondrion. Residues Gln-96 and 189-191 (DSH) each bind substrate. Positions 382, 445, and 448 each coordinate [4Fe-4S] cluster. Substrate contacts are provided by Arg-471 and Arg-476. The disordered stretch occupies residues 534–555 (YDPGEDTFQAPSGSGQVDVSPS). Residues 542-555 (QAPSGSGQVDVSPS) show a composition bias toward polar residues. Residues Arg-601 and 664-665 (SR) contribute to the substrate site.

It belongs to the aconitase/IPM isomerase family. Monomer. It depends on [4Fe-4S] cluster as a cofactor.

It localises to the mitochondrion. It catalyses the reaction citrate = D-threo-isocitrate. It functions in the pathway carbohydrate metabolism; tricarboxylic acid cycle; isocitrate from oxaloacetate: step 2/2. In terms of biological role, catalyzes the isomerization of citrate to isocitrate via cis-aconitate. The sequence is that of Probable aconitate hydratase, mitochondrial from Caenorhabditis elegans.